Reading from the N-terminus, the 341-residue chain is Farnesyl pyrophosphate synthase (341 aa).

Residues Lys48, Arg51, and Gln86 each contribute to the isopentenyl diphosphate site. Mg(2+)-binding residues include Asp93 and Asp97. Arg102 serves as a coordination point for dimethylallyl diphosphate. Arg103 lines the isopentenyl diphosphate pocket. Lys190, Thr191, Gln229, and Lys246 together coordinate dimethylallyl diphosphate.

It belongs to the FPP/GGPP synthase family. Requires Mg(2+) as cofactor.

It localises to the cytoplasm. The enzyme catalyses isopentenyl diphosphate + dimethylallyl diphosphate = (2E)-geranyl diphosphate + diphosphate. It carries out the reaction isopentenyl diphosphate + (2E)-geranyl diphosphate = (2E,6E)-farnesyl diphosphate + diphosphate. Its pathway is isoprenoid biosynthesis; farnesyl diphosphate biosynthesis; farnesyl diphosphate from geranyl diphosphate and isopentenyl diphosphate: step 1/1. It participates in isoprenoid biosynthesis; geranyl diphosphate biosynthesis; geranyl diphosphate from dimethylallyl diphosphate and isopentenyl diphosphate: step 1/1. In terms of biological role, catalyzes the sequential condensation of isopentenyl pyrophosphate with the allylic pyrophosphates, dimethylallyl pyrophosphate, and then with the resultant geranylpyrophosphate to the ultimate product farnesyl pyrophosphate. The protein is Farnesyl pyrophosphate synthase (FPS1) of Helianthus annuus (Common sunflower).